The primary structure comprises 225 residues: Histone H3-like centromeric protein cid (225 aa).

Basic residues predominate over residues M1–P11. The tract at residues M1–K131 is disordered. Residues F43 to D52 are compositionally biased toward polar residues. Residues S74 and S75 each carry the phosphoserine modification. At T76 the chain carries Phosphothreonine. S77 carries the post-translational modification Phosphoserine. Over residues R86–E103 the composition is skewed to polar residues. The tract at residues M133–F225 is H3-like.

It belongs to the histone H3 family. Forms a nucleosome-like histone octamer containing two molecules each of H2A, H2B, cid and H4 assembled in one cid-H4 heterotetramer and two H2A-H2B heterodimers. The cid-H4 heterotetramer is more compact and structurally more rigid than corresponding H3-H4 heterotetramers. Interacts with the condensin subunit Cap-G. Interacts with Chrac-14.

It is found in the nucleus. Its subcellular location is the chromosome. It localises to the centromere. The protein localises to the kinetochore. Its function is as follows. Histone H3-like variant which exclusively replaces conventional H3 in the nucleosome core of centromeric chromatin at the inner plate of the kinetochore. Required for recruitment and assembly of kinetochore proteins, mitotic progression and chromosome segregation. May serve as an epigenetic mark that propagates centromere identity through replication and cell division. The polypeptide is Histone H3-like centromeric protein cid (Drosophila melanogaster (Fruit fly)).